The primary structure comprises 406 residues: Indole-3-pyruvate monooxygenase YUCCA1 (406 aa).

An FAD-binding site is contributed by 21–26 (GAGPSG). An NADP(+)-binding site is contributed by 184–189 (GCGNSG).

Belongs to the FMO family. It depends on FAD as a cofactor. As to expression, expressed in coleoptile tips, root tips, leaf blade tips, shoot apical meristem, vasculature of stems and flowers.

It carries out the reaction indole-3-pyruvate + NADPH + O2 + H(+) = (indol-3-yl)acetate + CO2 + NADP(+) + H2O. Its function is as follows. Involved in auxin biosynthesis. Converts the indole-3-pyruvic acid (IPA) produced by the TAA family to indole-3-acetic acid (IAA). Functions downstream of TAR2 in auxin biosynthesis. Functions upstream of WOX11, a transcription factor that promotes the development of crown roots. This is Indole-3-pyruvate monooxygenase YUCCA1 from Oryza sativa subsp. japonica (Rice).